The chain runs to 574 residues: Proline--tRNA ligase (574 aa).

This sequence belongs to the class-II aminoacyl-tRNA synthetase family. ProS type 1 subfamily. Homodimer.

Its subcellular location is the cytoplasm. The catalysed reaction is tRNA(Pro) + L-proline + ATP = L-prolyl-tRNA(Pro) + AMP + diphosphate. Catalyzes the attachment of proline to tRNA(Pro) in a two-step reaction: proline is first activated by ATP to form Pro-AMP and then transferred to the acceptor end of tRNA(Pro). As ProRS can inadvertently accommodate and process non-cognate amino acids such as alanine and cysteine, to avoid such errors it has two additional distinct editing activities against alanine. One activity is designated as 'pretransfer' editing and involves the tRNA(Pro)-independent hydrolysis of activated Ala-AMP. The other activity is designated 'posttransfer' editing and involves deacylation of mischarged Ala-tRNA(Pro). The misacylated Cys-tRNA(Pro) is not edited by ProRS. This chain is Proline--tRNA ligase, found in Sodalis glossinidius (strain morsitans).